A 71-amino-acid chain; its full sequence is Brevinin-1E (71 aa).

Residues 1–22 (MFTLKKSMLLLFFLGTINLSLC) form the signal peptide. Positions 23–45 (EEERDADEEERRDNPDESEVEVE) are excised as a propeptide. Cys-65 and Cys-71 form a disulfide bridge.

This sequence belongs to the frog skin active peptide (FSAP) family. Brevinin subfamily. Expressed by the skin glands.

It localises to the secreted. In terms of biological role, shows antibacterial activity against representative Gram-negative and Gram-positive bacterial species, and a very high hemolytic activity. This chain is Brevinin-1E, found in Pelophylax lessonae (Pool frog).